The chain runs to 394 residues: 1-deoxy-D-xylulose 5-phosphate reductoisomerase (394 aa).

Residues threonine 14, glycine 15, serine 16, isoleucine 17, glycine 40, asparagine 43, and asparagine 130 each coordinate NADPH. Lysine 131 contributes to the 1-deoxy-D-xylulose 5-phosphate binding site. Glutamate 132 contacts NADPH. Residue aspartate 154 participates in Mn(2+) binding. 1-deoxy-D-xylulose 5-phosphate contacts are provided by serine 155, glutamate 156, serine 180, and histidine 203. Position 156 (glutamate 156) interacts with Mn(2+). Residue glycine 209 coordinates NADPH. Serine 216, asparagine 221, lysine 222, and glutamate 225 together coordinate 1-deoxy-D-xylulose 5-phosphate. Glutamate 225 contributes to the Mn(2+) binding site.

It belongs to the DXR family. The cofactor is Mg(2+). Mn(2+) is required as a cofactor.

The catalysed reaction is 2-C-methyl-D-erythritol 4-phosphate + NADP(+) = 1-deoxy-D-xylulose 5-phosphate + NADPH + H(+). It participates in isoprenoid biosynthesis; isopentenyl diphosphate biosynthesis via DXP pathway; isopentenyl diphosphate from 1-deoxy-D-xylulose 5-phosphate: step 1/6. Functionally, catalyzes the NADPH-dependent rearrangement and reduction of 1-deoxy-D-xylulose-5-phosphate (DXP) to 2-C-methyl-D-erythritol 4-phosphate (MEP). This Corynebacterium efficiens (strain DSM 44549 / YS-314 / AJ 12310 / JCM 11189 / NBRC 100395) protein is 1-deoxy-D-xylulose 5-phosphate reductoisomerase.